The sequence spans 333 residues: Diacylglycerol acyltransferase/mycolyltransferase Ag85C (333 aa).

The N-terminal stretch at 1–44 (MKFLQQMRKLFGLAAKFPARLTIAVIGTALLAGLVGVVGDTAIA) is a signal peptide. 86-87 (LR) contributes to the substrate binding site. The tract at residues 102-112 (FEEYYHSGLSV) is fibronectin-binding. Residues Ser170 and Asn198 each coordinate substrate. Residue Ser170 is the Nucleophile of the active site. Residue Glu274 is part of the active site. Substrate is bound by residues 276 to 279 (LTLS) and 306 to 308 (HSW). The active site involves His306.

This sequence belongs to the mycobacterial A85 antigen family. As to quaternary structure, homodimer.

The protein resides in the secreted. The enzyme catalyses an acyl-CoA + a 1,2-diacyl-sn-glycerol = a triacyl-sn-glycerol + CoA. The catalysed reaction is 2 alpha,alpha'-trehalose 6-mycolate = alpha,alpha'-trehalose 6,6'-bismycolate + alpha,alpha-trehalose. Its function is as follows. The antigen 85 proteins (FbpA, FbpB, FbpC) are responsible for the high affinity of mycobacteria to fibronectin, a large adhesive glycoprotein, which facilitates the attachment of M.tuberculosis to murine alveolar macrophages (AMs). They also help to maintain the integrity of the cell wall by catalyzing the transfer of mycolic acids to cell wall arabinogalactan and through the synthesis of alpha,alpha-trehalose dimycolate (TDM, cord factor). They catalyze the transfer of a mycoloyl residue from one molecule of alpha,alpha-trehalose monomycolate (TMM) to another TMM, leading to the formation of TDM. This is Diacylglycerol acyltransferase/mycolyltransferase Ag85C (fbpC) from Mycobacterium leprae (strain TN).